A 390-amino-acid chain; its full sequence is 4-hydroxy-3-methylbut-2-en-1-yl diphosphate synthase (flavodoxin) (390 aa).

Residues Cys-281, Cys-284, Cys-316, and Glu-323 each contribute to the [4Fe-4S] cluster site.

It belongs to the IspG family. The cofactor is [4Fe-4S] cluster.

The catalysed reaction is (2E)-4-hydroxy-3-methylbut-2-enyl diphosphate + oxidized [flavodoxin] + H2O + 2 H(+) = 2-C-methyl-D-erythritol 2,4-cyclic diphosphate + reduced [flavodoxin]. It participates in isoprenoid biosynthesis; isopentenyl diphosphate biosynthesis via DXP pathway; isopentenyl diphosphate from 1-deoxy-D-xylulose 5-phosphate: step 5/6. Functionally, converts 2C-methyl-D-erythritol 2,4-cyclodiphosphate (ME-2,4cPP) into 1-hydroxy-2-methyl-2-(E)-butenyl 4-diphosphate. The polypeptide is 4-hydroxy-3-methylbut-2-en-1-yl diphosphate synthase (flavodoxin) (Salinispora arenicola (strain CNS-205)).